The chain runs to 144 residues: Large ribosomal subunit protein uL13 (144 aa).

It belongs to the universal ribosomal protein uL13 family. In terms of assembly, part of the 50S ribosomal subunit.

In terms of biological role, this protein is one of the early assembly proteins of the 50S ribosomal subunit, although it is not seen to bind rRNA by itself. It is important during the early stages of 50S assembly. The polypeptide is Large ribosomal subunit protein uL13 (Clostridium botulinum (strain ATCC 19397 / Type A)).